The following is a 3574-amino-acid chain: Chromatin structure-remodeling complex protein SYD (3574 aa).

Disordered stretches follow at residues 76-105 (SCLP…GVSN), 123-211 (TSGR…KIDD), and 328-372 (DPKG…TERS). Composition is skewed to polar residues over residues 124-148 (SGRQ…QSNR) and 155-168 (PSNL…SQPH). Basic and acidic residues predominate over residues 169–181 (NRSETMNQRDVKS). A compositionally biased stretch (polar residues) spans 194–204 (WDQNMDNSQIF). A compositionally biased stretch (basic and acidic residues) spans 358–372 (RLDEMDFSSKETERS). Residues 573-647 (QKMKEERQRR…QREKINLLKI (75 aa)) form the HSA domain. Residues 766–933 (VSLYNNHLNG…WALLNFLLPN (168 aa)) form the Helicase ATP-binding domain. Residue 779-786 (DEMGLGKT) coordinates ATP. The DEAH box motif lies at 884–887 (DEGH). The Helicase C-terminal domain occupies 1077-1223 (MLDRMLPKLK…KLGVANQSIT (147 aa)). The Nuclear localization signal motif lies at 1266 to 1273 (ARRESEID). Disordered regions lie at residues 1342-1472 (KRKD…VSRT), 1500-1575 (HPTS…SDAE), 1588-1637 (IVSR…SGSH), 1690-1811 (GPVQ…QIEV), 1830-1868 (QPHF…QTAD), 2040-2068 (SSLS…LEKN), 2089-2115 (SSEE…TDEV), 2143-2162 (SSML…HSSI), 2179-2220 (LDDK…QMED), 2235-2338 (EEKE…DTND), 2350-2451 (EEKE…HMED), 2517-2538 (FESE…EVSE), 2684-2703 (SEEI…QPDD), 2718-2759 (IDIG…RDSR), 2865-2884 (DTEK…LHQL), 3017-3045 (EGTD…PSSS), 3189-3208 (NADS…VVEK), 3316-3337 (VDDS…AEPM), and 3512-3574 (TEDT…NEDV). A compositionally biased stretch (basic and acidic residues) spans 1362–1371 (AREVRSYEEK). Polar residues-rich tracts occupy residues 1399–1426 (SLAN…QAIT) and 1500–1511 (HPTSSLALTSPD). Positions 1532-1546 (GRGRGRSRGRGAGRG) are enriched in basic residues. Polar residues-rich tracts occupy residues 1555–1571 (GSNS…TSLA) and 1597–1614 (EGST…SATT). The segment covering 1617 to 1627 (RSDKAADKDLD) has biased composition (basic and acidic residues). 6 stretches are compositionally biased toward polar residues: residues 1690 to 1699 (GPVQNQNAVS), 1706 to 1752 (KSPS…STVE), 1796 to 1806 (DASSARSTGLT), 1832 to 1849 (HFSQ…SLSQ), 2040 to 2057 (SSLS…STTA), and 2090 to 2110 (SEEQ…LQAS). Acidic residues predominate over residues 2248 to 2260 (DDADTEQDPEESV). Residues 2438–2451 (DRPKDGTADTHMED) are compositionally biased toward basic and acidic residues. The span at 2718-2735 (IDIGITSGKTCQPSSSTQ) shows a compositional bias: polar residues. Composition is skewed to polar residues over residues 3034 to 3045 (KSQLADTEPSSS) and 3191 to 3204 (DSQL…SSPS). Positions 3523-3538 (KTEEKDAENPSDRLDG) are enriched in basic and acidic residues.

It belongs to the SNF2/RAD54 helicase family. As to quaternary structure, interacts with LFY. Binds to BARD1/ROW1. Phosphorylated. In terms of tissue distribution, mostly expressed in rapidly dividing cells in the vegetative, inflorescence, and root meristems, as well as in young leaf and flower primordia. Isoform 1 is predominantly found in seedlings whereas isoform 2 is present in both seedlings and inflorescences (at protein level).

It localises to the cytoplasm. The protein localises to the nucleus. In terms of biological role, catalytic component of the chromatin structure-remodeling complex (RSC), which is involved in transcription regulation and nucleosome positioning. Controls stem cell fate via the transcription regulation of WUS in the shoot apical meristem, by modulating its promoter. LFY-dependent repressor of the meristem identity switch from vegetative to reproductive development probably by modulating chromatin state. Involved in the regulation of floral homeotic gene expression in response to environmental stimuli. Required for carpel and ovule development, and for cotyledon separation via the regulation of CUC2 transcription. Regulates the promoters of several genes downstream of the jasmonate (JA) and ethylene (ET) signaling pathways. Required for resistance against the necrotrophic pathogen B.cinerea but not the biotrophic pathogen P.syringae. This Arabidopsis thaliana (Mouse-ear cress) protein is Chromatin structure-remodeling complex protein SYD (SYD).